Consider the following 200-residue polypeptide: Recombination protein RecR (200 aa).

A C4-type zinc finger spans residues 57-72 (CSECRTFTEEDTCAIC). A Toprim domain is found at 81-176 (GELCIVESPA…SASRIAHGVP (96 aa)).

Belongs to the RecR family.

Its function is as follows. May play a role in DNA repair. It seems to be involved in an RecBC-independent recombinational process of DNA repair. It may act with RecF and RecO. This Aliivibrio salmonicida (strain LFI1238) (Vibrio salmonicida (strain LFI1238)) protein is Recombination protein RecR.